The sequence spans 84 residues: Small ribosomal subunit protein bS16c (84 aa).

The protein belongs to the bacterial ribosomal protein bS16 family.

Its subcellular location is the plastid. It is found in the chloroplast. This is Small ribosomal subunit protein bS16c from Anthoceros angustus (Hornwort).